The following is a 166-amino-acid chain: DNA polymerase epsilon subunit C (166 aa).

The segment at 112–166 (SPEIDIESEDEVDEANEPEVGEPEVDEAEVEAEVEAEAAEPETHTLDEPRPESSS) is disordered. The span at 115-151 (IDIESEDEVDEANEPEVGEPEVDEAEVEAEVEAEAAE) shows a compositional bias: acidic residues. Positions 152 to 166 (PETHTLDEPRPESSS) are enriched in basic and acidic residues.

Heterotetramer. Consists of four subunits: POL2, DPB2, DPB3 and DPB4.

It localises to the nucleus. In terms of biological role, as accessory component of the DNA polymerase epsilon (DNA polymerase II) participates in chromosomal DNA replication. In Kluyveromyces lactis (strain ATCC 8585 / CBS 2359 / DSM 70799 / NBRC 1267 / NRRL Y-1140 / WM37) (Yeast), this protein is DNA polymerase epsilon subunit C (DPB3).